The sequence spans 633 residues: Pesticidal crystal protein Cry2Ad (633 aa).

This sequence belongs to the delta endotoxin family.

Promotes colloidosmotic lysis by binding to the midgut epithelial cells of insects. The chain is Pesticidal crystal protein Cry2Ad (cry2Ad) from Bacillus thuringiensis.